A 286-amino-acid polypeptide reads, in one-letter code: MPAATVDHSQRICEVWACNLEEEMKRIRQVTRKFNYIAMDTEFPGVVARPIGEFRSNADYQYQLLRCNVDLLKIIQLGLTFMNEQGEYPPGTSTWQFNFKFNLTEDMYAQDSIELLTSSGIQFKKHEEEGIETMYFAELLMTSGVVLCEGVKWLSFHSGYDFGYLIKILSNSKLPDEEVDFFEILRLFFPIIYDVKYLMKSCKNLKGGLQEVAEQLELERIGPQHQAGSDSLLTGMAFFKMREMFFEDHIDDAKYCGHLYGLGSGSSYVQNGTGNAYEEEANKQQS.

A divalent metal cation contacts are provided by Asp-40, Glu-42, Asp-161, Asp-230, and Glu-278.

This sequence belongs to the CAF1 family. Component of the CCR4-NOT complex. Requires Mn(2+) as cofactor. It depends on Mg(2+) as a cofactor. Co(2+) is required as a cofactor.

Its subcellular location is the nucleus. The protein localises to the cytoplasm. The enzyme catalyses Exonucleolytic cleavage of poly(A) to 5'-AMP.. In terms of biological role, has 3'-5' poly(A) exoribonuclease activity for synthetic poly(A) RNA substrate. Catalytic component of the CCR4-NOT complex which is one of the major cellular mRNA deadenylases and is linked to various cellular processes including bulk mRNA degradation, miRNA-mediated repression, translational repression during translational initiation and general transcription regulation. During miRNA-mediated repression the complex also seems to act as translational repressor during translational initiation. Additional complex functions may be a consequence of its influence on mRNA expression. In Danio rerio (Zebrafish), this protein is CCR4-NOT transcription complex subunit 7 (cnot7).